We begin with the raw amino-acid sequence, 1040 residues long: Beta-galactosidase (1040 aa).

Substrate-binding residues include N111 and D210. D210 lines the Na(+) pocket. Residues E427, H429, and E472 each coordinate Mg(2+). Substrate-binding positions include E472 and 548–551 (EYAH). Catalysis depends on E472, which acts as the Proton donor. Residue E548 is the Nucleophile of the active site. N608 is a binding site for Mg(2+). 2 residues coordinate Na(+): F612 and D615. Substrate-binding residues include D615 and W1016.

The protein belongs to the glycosyl hydrolase 2 family. As to quaternary structure, homotetramer. Mg(2+) serves as cofactor. Requires Na(+) as cofactor.

The catalysed reaction is Hydrolysis of terminal non-reducing beta-D-galactose residues in beta-D-galactosides.. The chain is Beta-galactosidase from Pectobacterium atrosepticum (strain SCRI 1043 / ATCC BAA-672) (Erwinia carotovora subsp. atroseptica).